A 1265-amino-acid polypeptide reads, in one-letter code: Kinesin-like protein Klp98A (1265 aa).

Residues 3–364 (SLKVAVRVRP…LRYANRAKNI (362 aa)) enclose the Kinesin motor domain. 100–107 (GQTGSGKT) contributes to the ATP binding site. 3 disordered regions span residues 597 to 621 (GASPYKRPERQYYPQRPMSRDDPEL), 828 to 864 (EAESQAMRAKKQNMKLQLGNKSMSTSTSTNEADDVSK), and 884 to 954 (VSSP…CTPS). Coiled coils occupy residues 619 to 670 (PELQ…EEMD) and 768 to 848 (AQFI…LGNK). Polar residues-rich tracts occupy residues 846–857 (GNKSMSTSTSTN), 884–901 (VSSPTITEGQQSPLSNCS), and 917–927 (SGSSEETSRTC). Over residues 933 to 946 (SGSGSGSVGIGGSG) the composition is skewed to gly residues. Positions 1035–1071 (DLNKAQLDEHIADLQDLQRRYIQMEQEMLQSVQDLEA) form a coiled coil. The PX domain maps to 1129–1259 (GEHFITIPSF…SFFKKGLFEN (131 aa)).

It belongs to the TRAFAC class myosin-kinesin ATPase superfamily. Kinesin family. In terms of assembly, interacts with Atg8a and Rab14.

Its subcellular location is the early endosome. In terms of biological role, plus end-directed motor protein involved in asymmetric cell division of sensory organ precursor (SOP) cells by playing a role in the asymmetric localization of Sara-expressing endosomes to the pIIa daughter cell but not to the pIIb cell. Targets Sara-expressing endosomes to the central spindle which is symmetrically arranged in early cell division. During late cytokinesis, central spindle asymmetry is generated by enrichment of Patronin on the pIIb side which protects microtubules from depolymerization by Klp10A while unprotected microtubules on the pIIa side are disassembled by Klp10A, leading to the asymmetric delivery of Sara-expressing endosomes to the pIIa daughter cell. Also plays a role in regulation of autophagosome formation, fusion and positioning and is required for normal localization of Rab14. The chain is Kinesin-like protein Klp98A from Drosophila melanogaster (Fruit fly).